We begin with the raw amino-acid sequence, 263 residues long: 3-methyl-2-oxobutanoate hydroxymethyltransferase 2 (263 aa).

Mg(2+) contacts are provided by Asp45 and Asp84. 3-methyl-2-oxobutanoate contacts are provided by residues 45–46 (DS), Asp84, and Lys112. Residue Glu114 participates in Mg(2+) binding. The active-site Proton acceptor is Glu181.

This sequence belongs to the PanB family. Homodecamer; pentamer of dimers. Mg(2+) serves as cofactor.

The protein localises to the cytoplasm. It catalyses the reaction 3-methyl-2-oxobutanoate + (6R)-5,10-methylene-5,6,7,8-tetrahydrofolate + H2O = 2-dehydropantoate + (6S)-5,6,7,8-tetrahydrofolate. The protein operates within cofactor biosynthesis; (R)-pantothenate biosynthesis; (R)-pantoate from 3-methyl-2-oxobutanoate: step 1/2. In terms of biological role, catalyzes the reversible reaction in which hydroxymethyl group from 5,10-methylenetetrahydrofolate is transferred onto alpha-ketoisovalerate to form ketopantoate. In Aliivibrio fischeri (strain ATCC 700601 / ES114) (Vibrio fischeri), this protein is 3-methyl-2-oxobutanoate hydroxymethyltransferase 2.